The sequence spans 213 residues: Protein arginine N-methyltransferase SFM1 (213 aa).

Phosphoserine occurs at positions 204 and 207.

Belongs to the class IV-like SAM-binding methyltransferase superfamily. Protein arginine N-methyltransferase SFM1 family.

The protein localises to the cytoplasm. Functionally, S-adenosyl-L-methionine-dependent protein-arginine N-methyltransferase that monomethylates ribosomal protein S3 (RPS3) at 'Arg-146'. This is Protein arginine N-methyltransferase SFM1 from Saccharomyces cerevisiae (strain ATCC 204508 / S288c) (Baker's yeast).